The chain runs to 431 residues: Tol-Pal system protein TolB (431 aa).

Positions 1–24 (MMKFLTRMLSAFAVLFFAISTAQA) are cleaved as a signal peptide. The segment at 318-340 (QVYRMSSSGGAASPVGGRGSAQI) is disordered. Over residues 323 to 332 (SSSGGAASPV) the composition is skewed to low complexity.

It belongs to the TolB family. In terms of assembly, the Tol-Pal system is composed of five core proteins: the inner membrane proteins TolA, TolQ and TolR, the periplasmic protein TolB and the outer membrane protein Pal. They form a network linking the inner and outer membranes and the peptidoglycan layer.

The protein localises to the periplasm. In terms of biological role, part of the Tol-Pal system, which plays a role in outer membrane invagination during cell division and is important for maintaining outer membrane integrity. The protein is Tol-Pal system protein TolB of Mannheimia succiniciproducens (strain KCTC 0769BP / MBEL55E).